The primary structure comprises 197 residues: Recombination protein RecR (197 aa).

Residues 57–72 form a C4-type zinc finger; sequence CSTCFGITESDPCHLC. The 96-residue stretch at 79-174 folds into the Toprim domain; sequence ASICVVEEPQ…KVTRLAHGIP (96 aa).

This sequence belongs to the RecR family.

Its function is as follows. May play a role in DNA repair. It seems to be involved in an RecBC-independent recombinational process of DNA repair. It may act with RecF and RecO. The sequence is that of Recombination protein RecR from Geotalea uraniireducens (strain Rf4) (Geobacter uraniireducens).